The sequence spans 244 residues: 1-(5-phosphoribosyl)-5-[(5-phosphoribosylamino)methylideneamino] imidazole-4-carboxamide isomerase (244 aa).

Residue aspartate 9 is the Proton acceptor of the active site. Aspartate 131 acts as the Proton donor in catalysis.

Belongs to the HisA/HisF family.

The protein localises to the cytoplasm. It carries out the reaction 1-(5-phospho-beta-D-ribosyl)-5-[(5-phospho-beta-D-ribosylamino)methylideneamino]imidazole-4-carboxamide = 5-[(5-phospho-1-deoxy-D-ribulos-1-ylimino)methylamino]-1-(5-phospho-beta-D-ribosyl)imidazole-4-carboxamide. It functions in the pathway amino-acid biosynthesis; L-histidine biosynthesis; L-histidine from 5-phospho-alpha-D-ribose 1-diphosphate: step 4/9. The sequence is that of 1-(5-phosphoribosyl)-5-[(5-phosphoribosylamino)methylideneamino] imidazole-4-carboxamide isomerase from Campylobacter jejuni subsp. doylei (strain ATCC BAA-1458 / RM4099 / 269.97).